Consider the following 397-residue polypeptide: DNA-directed RNA polymerase subunit Rpo1C (397 aa).

It belongs to the RNA polymerase beta' chain family. As to quaternary structure, part of the RNA polymerase complex. An artificial construct of the RNAP clamp domain (including part of this protein) contacts transcription elongation factors Spt4 and Spt5.

The protein resides in the cytoplasm. The enzyme catalyses RNA(n) + a ribonucleoside 5'-triphosphate = RNA(n+1) + diphosphate. Its function is as follows. DNA-dependent RNA polymerase (RNAP) catalyzes the transcription of DNA into RNA using the four ribonucleoside triphosphates as substrates. Forms part of the jaw domain. The sequence is that of DNA-directed RNA polymerase subunit Rpo1C from Pyrococcus furiosus (strain ATCC 43587 / DSM 3638 / JCM 8422 / Vc1).